The primary structure comprises 199 residues: Sulfocyanin (199 aa).

The chain crosses the membrane as a helical; Signal-anchor for type II membrane protein span at residues 7 to 27 (VLPVVVGILVVIIAVAVGVYV). The Plastocyanin-like domain occupies 79-188 (NFNGTSSGSL…SGMWAVLVAS (110 aa)). His110, Cys171, His176, and Met181 together coordinate Cu cation.

The protein belongs to the multicopper oxidase family.

Its subcellular location is the cell membrane. In terms of biological role, the 4 redox proteins SoxE, SoxF, SoxG and SoxH probably form part of a membrane respiratory complex together with SoxM, a catalytic subunit of cytochrome oxidase. The chain is Sulfocyanin (soxE) from Sulfolobus acidocaldarius (strain ATCC 33909 / DSM 639 / JCM 8929 / NBRC 15157 / NCIMB 11770).